Consider the following 149-residue polypeptide: Large ribosomal subunit protein uL15A (149 aa).

The disordered stretch occupies residues 21 to 40 (RIGKHRKQRGGRGNAGGQHH).

The protein belongs to the universal ribosomal protein uL15 family. As to quaternary structure, component of the large ribosomal subunit.

It is found in the cytoplasm. The protein resides in the cytosol. It localises to the endoplasmic reticulum. Component of the large ribosomal subunit. The ribosome is a large ribonucleoprotein complex responsible for the synthesis of proteins in the cell. This Entamoeba histolytica (strain ATCC 30459 / HM-1:IMSS / ABRM) protein is Large ribosomal subunit protein uL15A (rpl27a-1).